A 217-amino-acid polypeptide reads, in one-letter code: Small ribosomal subunit protein uS3c (217 aa).

Residues 43–117 enclose the KH type-2 domain; the sequence is IKNYVQKNRK…KLNIAITRIA (75 aa).

Belongs to the universal ribosomal protein uS3 family. Part of the 30S ribosomal subunit.

Its subcellular location is the plastid. The protein resides in the chloroplast. The chain is Small ribosomal subunit protein uS3c (rps3) from Ranunculus macranthus (Large buttercup).